Reading from the N-terminus, the 464-residue chain is 3-isopropylmalate dehydratase large subunit (464 aa).

Residues Cys-337, Cys-397, and Cys-400 each contribute to the [4Fe-4S] cluster site.

Belongs to the aconitase/IPM isomerase family. LeuC type 1 subfamily. Heterodimer of LeuC and LeuD. Requires [4Fe-4S] cluster as cofactor.

The catalysed reaction is (2R,3S)-3-isopropylmalate = (2S)-2-isopropylmalate. It functions in the pathway amino-acid biosynthesis; L-leucine biosynthesis; L-leucine from 3-methyl-2-oxobutanoate: step 2/4. Functionally, catalyzes the isomerization between 2-isopropylmalate and 3-isopropylmalate, via the formation of 2-isopropylmaleate. The polypeptide is 3-isopropylmalate dehydratase large subunit (Bacillus cereus (strain B4264)).